Reading from the N-terminus, the 456-residue chain is Aromatic amino acid transport protein AroP (456 aa).

Topologically, residues 1-18 (MEGQQHGEQLKRGLKNRH) are cytoplasmic. A helical membrane pass occupies residues 19-39 (IQLIALGGAIGTGLFLGSASV). At 40 to 41 (IQ) the chain is on the periplasmic side. The chain crosses the membrane as a helical span at residues 42–62 (SAGPGIILGYAIAGFIAFLIM). The Cytoplasmic segment spans residues 63-85 (RQLGEMVVEEPVAGSFSHFAYKY). A helical transmembrane segment spans residues 86–106 (WGSFAGFASGWNYWVLYVLVA). Over 107–116 (MAELTAVGKY) the chain is Periplasmic. The helical transmembrane segment at 117-137 (IQFWYPEIPTWVSAAVFFVVI) threads the bilayer. Topologically, residues 138 to 154 (NAINLTNVKVFGEMEFW) are cytoplasmic. Residues 155–175 (FAIIKVIAVVAMIIFGAWLLF) traverse the membrane as a helical segment. Over 176-200 (SGNGGPQASVSNLWDQGGFLPHGFT) the chain is Periplasmic. A helical transmembrane segment spans residues 201-221 (GLVMMMAIIMFSFGGLELVGI). Topologically, residues 222-239 (TAAEADNPEQSIPKATNQ) are cytoplasmic. Residues 240-260 (VIYRILIFYIGSLAVLLSLMP) traverse the membrane as a helical segment. Residues 261 to 270 (WTRVTADTSP) are Periplasmic-facing. Residues 271–291 (FVLIFHELGDTFVANALNIVV) traverse the membrane as a helical segment. The Cytoplasmic segment spans residues 292–332 (LTAALSVYNSCVYCNSRMLFGLAQQGNAPKALASVDKRGVP). A helical membrane pass occupies residues 333 to 353 (VNTILVSALVTALCVLINYLA). At 354-357 (PESA) the chain is on the periplasmic side. A helical membrane pass occupies residues 358–378 (FGLLMALVVSALVINWAMISL). Residues 379–398 (AHMKFRRAKQEQGVVTRFPA) lie on the Cytoplasmic side of the membrane. The chain crosses the membrane as a helical span at residues 399-419 (LLYPLGNWICLLFMAAVLVIM). Residues 420–424 (LMTPG) lie on the Periplasmic side of the membrane. A helical transmembrane segment spans residues 425-445 (MAISVYLIPVWLIVLGIGYLF). Topologically, residues 446-456 (KEKTAKAVKAH) are cytoplasmic.

This sequence belongs to the amino acid-polyamine-organocation (APC) superfamily. Amino acid transporter (AAT) (TC 2.A.3.1) family.

It is found in the cell inner membrane. The enzyme catalyses L-phenylalanine(in) + H(+)(in) = L-phenylalanine(out) + H(+)(out). It carries out the reaction L-tryptophan(in) + H(+)(in) = L-tryptophan(out) + H(+)(out). The catalysed reaction is L-tyrosine(in) + H(+)(in) = L-tyrosine(out) + H(+)(out). Its function is as follows. Permease that is involved in the active transport across the cytoplasmic membrane of all three aromatic amino acids, phenylalanine, tyrosine and tryptophan. The sequence is that of Aromatic amino acid transport protein AroP (aroP) from Escherichia coli O6:H1 (strain CFT073 / ATCC 700928 / UPEC).